We begin with the raw amino-acid sequence, 63 residues long: UPF0337 protein SERP0494 (63 aa).

The disordered stretch occupies residues 1–46 (MAEDKFEQAKGNIKETVGNATDNKELEKDGKGDKASGKAKEAVENV). The span at 22-46 (DNKELEKDGKGDKASGKAKEAVENV) shows a compositional bias: basic and acidic residues.

The protein belongs to the UPF0337 (CsbD) family.

This is UPF0337 protein SERP0494 from Staphylococcus epidermidis (strain ATCC 35984 / DSM 28319 / BCRC 17069 / CCUG 31568 / BM 3577 / RP62A).